A 409-amino-acid chain; its full sequence is Phosphoserine phosphatase SerB2 (409 aa).

2 ACT domains span residues 8 to 86 (LITV…RSDD) and 102 to 174 (GRPI…DYGL). The Nucleophile role is filled by Asp-185. Mg(2+) contacts are provided by Asp-185 and Asp-187. The active-site Proton donor is Asp-187. Residues Glu-194, Arg-230, 273–274 (SG), and Lys-318 each bind substrate. Asp-341 is a binding site for Mg(2+). Asn-344 is a substrate binding site.

It belongs to the HAD-like hydrolase superfamily. SerB family. In terms of assembly, homodimer. The dimeric population shifts to a tetramer in the presence of L-serine, which inactivates the enzyme. The cofactor is Mg(2+). Mn(2+) is required as a cofactor.

The protein resides in the secreted. The protein localises to the host cytoplasm. It localises to the host cytosol. It catalyses the reaction O-phospho-L-serine + H2O = L-serine + phosphate. The catalysed reaction is O-phospho-D-serine + H2O = D-serine + phosphate. It carries out the reaction O-phospho-L-seryl-[protein] + H2O = L-seryl-[protein] + phosphate. The enzyme catalyses O-phospho-L-threonyl-[protein] + H2O = L-threonyl-[protein] + phosphate. It functions in the pathway amino-acid biosynthesis; L-serine biosynthesis; L-serine from 3-phospho-D-glycerate: step 3/3. With respect to regulation, clofazimine, a drug being evaluated for XDR and MDR tuberculosis, inhibits SerB2 phosphatase activity and reverses the various functional effects described above and interactions with host proteins. Is inhibited by known PSP inhibitors such as chlorpromazine, DL-AP3 and sodium orthovanadate, but not by okadaic acid. By binding to the ACT domains, amino-acids have various effects on enzyme activity: L-serine and L-glycine act as inhibitors, whereas L-lysine, L-tyrosine and L-phenylalanine are activators. High throughput screen has been performed to identify specific PSP inhibitors with activity against intracellular bacteria; the two best hits identified in this screen, clorobiocin and rosaniline, are bactericidal and kill bacteria in infected macrophages in a dose-dependent manner. Catalyzes the dephosphorylation of O-phospho-L-serine into L-serine, a step in the L-serine biosynthetic pathway. Exhibits high specificity for L-phosphoserine compared to substrates like L-phosphothreonine (5% relative activity) and L-phosphotyrosine (1.7% relative activity). Its function is as follows. In the host, induces significant cytoskeleton rearrangements through cofilin dephosphorylation and its subsequent activation, and affects the expression of genes that regulate actin dynamics. It specifically interacts with HSP90, HSP70 and HSP27 that block apoptotic pathways but not with other HSPs. Also interacts with GAPDH. It actively dephosphorylates MAP kinase p38 and NF-kappa B p65 (specifically at Ser-536) that play crucial roles in inflammatory and immune responses. This in turn leads to down-regulation of Interleukin 8, a chemotactic and inflammatory cytokine. Thus might help the pathogen to evade the host's immune response. Exogenous addition of purified SerB2 protein to human THP-1 cells (that can be differentiated into macrophage-like cells) induces microtubule rearrangements; the phosphatase activity is co-related to the elicited rearrangements, while addition of the ACT-domains alone elicits no rearrangements. This is Phosphoserine phosphatase SerB2 from Mycobacterium tuberculosis (strain ATCC 25618 / H37Rv).